Here is a 478-residue protein sequence, read N- to C-terminus: Glutamyl-tRNA(Gln) amidotransferase subunit A (478 aa).

Active-site charge relay system residues include Lys-68 and Ser-143. Ser-167 serves as the catalytic Acyl-ester intermediate.

It belongs to the amidase family. GatA subfamily. Heterotrimer of A, B and C subunits.

The catalysed reaction is L-glutamyl-tRNA(Gln) + L-glutamine + ATP + H2O = L-glutaminyl-tRNA(Gln) + L-glutamate + ADP + phosphate + H(+). In terms of biological role, allows the formation of correctly charged Gln-tRNA(Gln) through the transamidation of misacylated Glu-tRNA(Gln) in organisms which lack glutaminyl-tRNA synthetase. The reaction takes place in the presence of glutamine and ATP through an activated gamma-phospho-Glu-tRNA(Gln). The sequence is that of Glutamyl-tRNA(Gln) amidotransferase subunit A (gatA) from Mycoplasma pneumoniae (strain ATCC 29342 / M129 / Subtype 1) (Mycoplasmoides pneumoniae).